Here is a 607-residue protein sequence, read N- to C-terminus: MFPQKITLWLYPLGLFANLFFGTAFCVQWSLTRKKGYSVVPKIFWYLSGTGAVFMICHGFIQSQYPIALLHSFNLIIYFRNLNIASLNPLPVSKIASLLVSVATAITVSFAIGTRYLPHMTWMASPNILHLNLPEASLSWQLIGCIGLTIFSLRFFIQWFYLEYKNQSALPAPFWKASLLGGSICLLYFLRTGDLVNVLCYGCGLFPSLANLRIASREAFRKPFSNSCFISAGEHSGDTLGGNLLKEMHAKYPDIHCFGVGGPQMRAQNFHALFAMEKFQVSGFWEVLLALPKLWYRYQLLYRNILKTNPRTVICIDFPDFHFLLIKKLRSRGYKGKIVHYVCPSIWAWRPSRKTVLEKYLDLLLLILPFEQNLFKDSALRTVYLGHPLSETIKSFSPNLNWKDQLHLPTDKPFIAAFPGSRRSDILRNLTIQVQAFQASSLASTHHLLVSSANPEYDHLILEVLQQNRCLHSHIVPSQFRYELMRECDFALAKCGTIVLETALNLTPTIVTCQLRPLDTFLAKYIFNIILPAYSLPNIILGRTIFPEFIGGKKDFQYEDVAAALNILKTSQAQEKQKDSCRDVYQAINESASSMKECLSLIFETAS.

The segment at 1-224 is unknown; it reads MFPQKITLWL…ASREAFRKPF (224 aa). A lipid-A-disaccharide synthase region spans residues 225 to 607; it reads SNSCFISAGE…CLSLIFETAS (383 aa).

In the C-terminal section; belongs to the LpxB family.

The catalysed reaction is a lipid X + a UDP-2-N,3-O-bis[(3R)-3-hydroxyacyl]-alpha-D-glucosamine = a lipid A disaccharide + UDP + H(+). The protein operates within bacterial outer membrane biogenesis; LPS lipid A biosynthesis. In terms of biological role, condensation of UDP-2,3-diacylglucosamine and 2,3-diacylglucosamine-1-phosphate to form lipid A disaccharide, a precursor of lipid A, a phosphorylated glycolipid that anchors the lipopolysaccharide to the outer membrane of the cell. In Chlamydia trachomatis serovar A (strain ATCC VR-571B / DSM 19440 / HAR-13), this protein is Lipid-A-disaccharide synthase (lpxB).